The primary structure comprises 467 residues: 3-isopropylmalate dehydratase large subunit (467 aa).

Residues C347, C407, and C410 each contribute to the [4Fe-4S] cluster site. Positions 422 to 442 are enriched in polar residues; that stretch reads QISASSSNRNFKGRQGSSSGR. Residues 422–443 are disordered; it reads QISASSSNRNFKGRQGSSSGRT.

The protein belongs to the aconitase/IPM isomerase family. LeuC type 1 subfamily. As to quaternary structure, heterodimer of LeuC and LeuD. It depends on [4Fe-4S] cluster as a cofactor.

The catalysed reaction is (2R,3S)-3-isopropylmalate = (2S)-2-isopropylmalate. Its pathway is amino-acid biosynthesis; L-leucine biosynthesis; L-leucine from 3-methyl-2-oxobutanoate: step 2/4. Catalyzes the isomerization between 2-isopropylmalate and 3-isopropylmalate, via the formation of 2-isopropylmaleate. This chain is 3-isopropylmalate dehydratase large subunit, found in Nostoc punctiforme (strain ATCC 29133 / PCC 73102).